The chain runs to 476 residues: MEFESVIGLEVHAELLTNTKIYCGCTTEFGGKPNTHVCPVCLGLPGSLPQLNKRVLELGIKAGLALNCEITKVGRMDRKNYFYPDCPKNYQITQDELPICRNGYIDIELESGEVKRIGIERIHIEEDAGKLLHTKRGTLVDFNRAGVPLIEVVSKPDIRTPEEATLYLTKLRSILSSAQISDCKMEEGSLRCDGNISIRERGTEPFGIRSEIKNMNSFKALEKALNYEFDRQVEAVTNGEALSVETRRWDETNNKTIVMRSKEQANDYRYFPEGDLVTLNVSDEWIEEIRNTIPELPYQKADRFVKEYGLPKYDAHVLTLTDSMADYFDECAKLSGDPKAASNWIMGDISRLMKEESTWIEDLKFSPKDLAELIEVIKEGTISSAIGKKVLEDMFAEGKSPKTIIDEKGLKQNNDEGAIRQLVNKVLDENPQVIEQYKSGRTRILGFAVGQVMKETKGQANPGIVNKLVTEEVEKR.

This sequence belongs to the GatB/GatE family. GatB subfamily. Heterotrimer of A, B and C subunits.

It carries out the reaction L-glutamyl-tRNA(Gln) + L-glutamine + ATP + H2O = L-glutaminyl-tRNA(Gln) + L-glutamate + ADP + phosphate + H(+). It catalyses the reaction L-aspartyl-tRNA(Asn) + L-glutamine + ATP + H2O = L-asparaginyl-tRNA(Asn) + L-glutamate + ADP + phosphate + 2 H(+). Allows the formation of correctly charged Asn-tRNA(Asn) or Gln-tRNA(Gln) through the transamidation of misacylated Asp-tRNA(Asn) or Glu-tRNA(Gln) in organisms which lack either or both of asparaginyl-tRNA or glutaminyl-tRNA synthetases. The reaction takes place in the presence of glutamine and ATP through an activated phospho-Asp-tRNA(Asn) or phospho-Glu-tRNA(Gln). This is Aspartyl/glutamyl-tRNA(Asn/Gln) amidotransferase subunit B from Clostridium botulinum (strain Alaska E43 / Type E3).